The following is a 126-amino-acid chain: Small ribosomal subunit protein uS11 (126 aa).

It belongs to the universal ribosomal protein uS11 family. Part of the 30S ribosomal subunit. Interacts with proteins S7 and S18. Binds to IF-3.

Functionally, located on the platform of the 30S subunit, it bridges several disparate RNA helices of the 16S rRNA. Forms part of the Shine-Dalgarno cleft in the 70S ribosome. This is Small ribosomal subunit protein uS11 from Desulfotalea psychrophila (strain LSv54 / DSM 12343).